Consider the following 571-residue polypeptide: MTLNGWMQIALYGAVVLALVRPLGGYMTRVFDGERTLLSPALAPIERGLYRVSGIDARQEQTWLAYAGAMVLFNVAGFVLLYALLRLQALLPLNPADQAAVAPDLAFNTATSFVTNTNWQSYGGETTLTYLSQMLGLTHQNFVSAASGMAVAVALIRGFARASTKTLGSCWVDMTRATLYVLLPLCTVLALFYVSQGMPQTLSPYVEATTLEGAKQTIAVGPVASQVAIKMLGTNGGGFFNANAAHPFENPTALSNFLQMLSIFVIGAALTNVFGRMVGDERQGWAILTAMGLLFLAGVTVTYWAEANAQGVLSNLGLTGGNMEGKEVRFGIAASALFAVITTAASCGAVNAMHDSFTALGGLIPLLNMQLGEVIIGGVGAGLYGMLVFVVVAIFVAGLMVGRTPEYLGKKIEAREVKMAMLGILCLPLMMLGFTAFATVVPDGLAGPANAGPHGFSEILYAYTSAAANNGSAFGGLTANTLFYNTTLAIGMLVGRFFVKIPVLAIAGSLAAKKRLPASAGTFPTHGGLFVGLLVGVVLIIGGLTFFPALALGPVVEHFAGAAGQTFATGG.

Helical transmembrane passes span 5 to 25 (GWMQ…PLGG), 64 to 84 (LAYA…LYAL), 136 to 156 (GLTH…VALI), 179 to 199 (LYVL…QGMP), 220 to 240 (VGPV…GGFF), 254 to 274 (LSNF…TNVF), 285 to 305 (WAIL…TYWA), 330 to 350 (FGIA…CGAV), 375 to 395 (IIGG…VAIF), 421 to 441 (MLGI…ATVV), 488 to 508 (LAIG…AIAG), and 527 to 547 (GGLF…LTFF).

It belongs to the KdpA family. In terms of assembly, the system is composed of three essential subunits: KdpA, KdpB and KdpC.

It localises to the cell inner membrane. Its function is as follows. Part of the high-affinity ATP-driven potassium transport (or Kdp) system, which catalyzes the hydrolysis of ATP coupled with the electrogenic transport of potassium into the cytoplasm. This subunit binds the periplasmic potassium ions and delivers the ions to the membrane domain of KdpB through an intramembrane tunnel. The chain is Potassium-transporting ATPase potassium-binding subunit from Methylorubrum extorquens (strain PA1) (Methylobacterium extorquens).